A 579-amino-acid polypeptide reads, in one-letter code: Probable methyl-accepting chemotaxis protein BT9727_0355 (579 aa).

Residues 1 to 13 (MKKYWHKLSFLQK) are Cytoplasmic-facing. The helical transmembrane segment at 14-34 (NVLLTVLVILTLVGTMGALSF) threads the bilayer. At 35–198 (NMFQNSMMSI…ASIVPSTKEK (164 aa)) the chain is on the extracellular side. A helical transmembrane segment spans residues 199-219 (FIIQGLMFICISVLIATVIQF). At 220 to 579 (LIVRNALAPL…LQELIGEFKS (360 aa)) the chain is on the cytoplasmic side. One can recognise an HAMP domain in the interval 223–274 (RNALAPLRDLREGLRRVGEGDLNIKLEERSDDIGIINSYFNNTIEKFKGIID). The residue at position 289 (Glu-289) is a Glutamate methyl ester (Glu). Residues 293-529 (STKENSMAVQ…NIVRVVNELS (237 aa)) enclose the Methyl-accepting transducer domain. Glutamate methyl ester (Glu) is present on Glu-548.

This sequence belongs to the methyl-accepting chemotaxis (MCP) protein family.

Its subcellular location is the cell membrane. In terms of biological role, chemotactic-signal transducers respond to changes in the concentration of attractants and repellents in the environment, transduce a signal from the outside to the inside of the cell, and facilitate sensory adaptation through the variation of the level of methylation. The protein is Probable methyl-accepting chemotaxis protein BT9727_0355 of Bacillus thuringiensis subsp. konkukian (strain 97-27).